The following is a 254-amino-acid chain: 3-deoxy-manno-octulosonate cytidylyltransferase (254 aa).

It belongs to the KdsB family.

The protein resides in the cytoplasm. The catalysed reaction is 3-deoxy-alpha-D-manno-oct-2-ulosonate + CTP = CMP-3-deoxy-beta-D-manno-octulosonate + diphosphate. The protein operates within nucleotide-sugar biosynthesis; CMP-3-deoxy-D-manno-octulosonate biosynthesis; CMP-3-deoxy-D-manno-octulosonate from 3-deoxy-D-manno-octulosonate and CTP: step 1/1. Its pathway is bacterial outer membrane biogenesis; lipopolysaccharide biosynthesis. Its function is as follows. Activates KDO (a required 8-carbon sugar) for incorporation into bacterial lipopolysaccharide in Gram-negative bacteria. This is 3-deoxy-manno-octulosonate cytidylyltransferase from Bordetella parapertussis (strain 12822 / ATCC BAA-587 / NCTC 13253).